Here is a 297-residue protein sequence, read N- to C-terminus: UBX domain-containing protein 1 (297 aa).

N-acetylalanine is present on alanine 2. The UBA domain maps to 2-42 (AELTALESLIEMGFPRGRAEKALALTGNQGIEAAMDWLMEH). Residues 38 to 212 (WLMEHEDDPD…QEPPTKREYD (175 aa)) are disordered. A compositionally biased stretch (acidic residues) spans 42–52 (HEDDPDVDEPL). Residues 43-297 (EDDPDVDEPL…VLIVAKKCPS (255 aa)) form an interaction with BRCA1 region. 2 stretches are compositionally biased toward basic and acidic residues: residues 86 to 122 (LTEEERQEQTKRMLELVAQKQREREEREEREALEREK) and 137 to 177 (KLQE…ERAQ). Residues 86–172 (LTEEERQEQT…RVREKIERDK (87 aa)) are a coiled coil. Serine 199 bears the Phosphoserine mark. Residue serine 200 is modified to Phosphoserine; by MAPK12. 2 positions are modified to phosphothreonine: threonine 207 and threonine 229. In terms of domain architecture, UBX spans 209–291 (REYDQCRIQV…GLVPSAVLIV (83 aa)). Serine 270 is subject to Phosphoserine.

Component of a complex required to couple retrotranslocation, ubiquitination and deglycosylation composed of NGLY1, SAKS1, AMFR, VCP and RAD23B. Interacts with HOMER2. Interacts directly with VCP. Interacts with BRCA1 and BARD1; interaction takes place when BRCA1 is not autoubiquitinated bur is strongly enhanced in the presence of autoubiquitinated BRCA1.

Its subcellular location is the cytoplasm. Functionally, ubiquitin-binding protein that interacts with the BRCA1-BARD1 heterodimer, and regulates its activity. Specifically binds 'Lys-6'-linked polyubiquitin chains. Interaction with autoubiquitinated BRCA1, leads to inhibit the E3 ubiquitin-protein ligase activity of the BRCA1-BARD1 heterodimer. Component of a complex required to couple deglycosylation and proteasome-mediated degradation of misfolded proteins in the endoplasmic reticulum that are retrotranslocated in the cytosol. This Rattus norvegicus (Rat) protein is UBX domain-containing protein 1 (Ubxn1).